We begin with the raw amino-acid sequence, 142 residues long: Large ribosomal subunit protein uL11 (142 aa).

Belongs to the universal ribosomal protein uL11 family. As to quaternary structure, part of the ribosomal stalk of the 50S ribosomal subunit. Interacts with L10 and the large rRNA to form the base of the stalk. L10 forms an elongated spine to which L12 dimers bind in a sequential fashion forming a multimeric L10(L12)X complex. One or more lysine residues are methylated.

Forms part of the ribosomal stalk which helps the ribosome interact with GTP-bound translation factors. The protein is Large ribosomal subunit protein uL11 of Bradyrhizobium sp. (strain ORS 278).